Reading from the N-terminus, the 490-residue chain is N-succinylglutamate 5-semialdehyde dehydrogenase (490 aa).

223 to 228 (GSSRTG) provides a ligand contact to NAD(+). Catalysis depends on residues E246 and C280.

The protein belongs to the aldehyde dehydrogenase family. AstD subfamily.

The catalysed reaction is N-succinyl-L-glutamate 5-semialdehyde + NAD(+) + H2O = N-succinyl-L-glutamate + NADH + 2 H(+). It functions in the pathway amino-acid degradation; L-arginine degradation via AST pathway; L-glutamate and succinate from L-arginine: step 4/5. Catalyzes the NAD-dependent reduction of succinylglutamate semialdehyde into succinylglutamate. The sequence is that of N-succinylglutamate 5-semialdehyde dehydrogenase from Pseudoalteromonas atlantica (strain T6c / ATCC BAA-1087).